The primary structure comprises 278 residues: 4-diphosphocytidyl-2-C-methyl-D-erythritol kinase (278 aa).

Lysine 10 is a catalytic residue. Position 93 to 103 (93 to 103) interacts with ATP; it reads PMGGGLGGGSS. The active site involves aspartate 135.

The protein belongs to the GHMP kinase family. IspE subfamily.

The catalysed reaction is 4-CDP-2-C-methyl-D-erythritol + ATP = 4-CDP-2-C-methyl-D-erythritol 2-phosphate + ADP + H(+). Its pathway is isoprenoid biosynthesis; isopentenyl diphosphate biosynthesis via DXP pathway; isopentenyl diphosphate from 1-deoxy-D-xylulose 5-phosphate: step 3/6. Functionally, catalyzes the phosphorylation of the position 2 hydroxy group of 4-diphosphocytidyl-2C-methyl-D-erythritol. This is 4-diphosphocytidyl-2-C-methyl-D-erythritol kinase from Thiobacillus denitrificans (strain ATCC 25259 / T1).